A 501-amino-acid chain; its full sequence is Aspartate--tRNA ligase, cytoplasmic (501 aa).

Thr-52 carries the post-translational modification Phosphothreonine. Lys-74 carries the N6-acetyllysine modification. An L-aspartate-binding site is contributed by Glu-229. Ser-249 carries the post-translational modification Phosphoserine. Residues 251–254 (QLYK) are aspartate. Residue Arg-273 participates in L-aspartate binding. Residues 273 to 275 (RAE) and 281 to 283 (RHL) contribute to the ATP site. Lys-374 carries the N6-acetyllysine modification. The tract at residues 411–415 (KQSNS) is binding site for the 3'-end of tRNA. Glu-424 provides a ligand contact to ATP. The L-aspartate site is built by Ser-427 and Arg-431. An ATP-binding site is contributed by 472–475 (GLER). A Phosphothreonine; by PKA modification is found at Thr-500.

The protein belongs to the class-II aminoacyl-tRNA synthetase family. Type 2 subfamily. As to quaternary structure, homodimer. Part of a multisubunit complex that groups tRNA ligases for Arg (RARS1), Asp (DARS1), Gln (QARS1), Ile (IARS1), Leu (LARS1), Lys (KARS1), Met (MARS1) the bifunctional ligase for Glu and Pro (EPRS1) and the auxiliary subunits AIMP1/p43, AIMP2/p38 and EEF1E1/p18. Expression in the developing and adult brain shows similar patterns. Highly expressed in the ventricular and subventricular zones, including hippocampal subfields, the midlateral temporal cortex and the frontal polar cortex. The cerebellum, cerebral cortex, hippocampus, and lateral ventricle show preferential neuronal expression. Expression in the peripheral neurons is evident in the colon.

The protein localises to the cytoplasm. It is found in the cytosol. It catalyses the reaction tRNA(Asp) + L-aspartate + ATP = L-aspartyl-tRNA(Asp) + AMP + diphosphate. Catalyzes the specific attachment of an amino acid to its cognate tRNA in a 2 step reaction: the amino acid (AA) is first activated by ATP to form AA-AMP and then transferred to the acceptor end of the tRNA. This chain is Aspartate--tRNA ligase, cytoplasmic, found in Homo sapiens (Human).